Reading from the N-terminus, the 285-residue chain is Dermonecrotic toxin LlSicTox-alphaIII1ii (285 aa).

Residue histidine 12 is part of the active site. The Mg(2+) site is built by glutamate 32 and aspartate 34. Catalysis depends on histidine 47, which acts as the Nucleophile. Cysteine 51 and cysteine 57 are oxidised to a cystine. Residue aspartate 91 coordinates Mg(2+).

Belongs to the arthropod phospholipase D family. Class I subfamily. Requires Mg(2+) as cofactor. Expressed by the venom gland.

The protein localises to the secreted. It carries out the reaction an N-(acyl)-sphingosylphosphocholine = an N-(acyl)-sphingosyl-1,3-cyclic phosphate + choline. The catalysed reaction is an N-(acyl)-sphingosylphosphoethanolamine = an N-(acyl)-sphingosyl-1,3-cyclic phosphate + ethanolamine. The enzyme catalyses a 1-acyl-sn-glycero-3-phosphocholine = a 1-acyl-sn-glycero-2,3-cyclic phosphate + choline. It catalyses the reaction a 1-acyl-sn-glycero-3-phosphoethanolamine = a 1-acyl-sn-glycero-2,3-cyclic phosphate + ethanolamine. Dermonecrotic toxins cleave the phosphodiester linkage between the phosphate and headgroup of certain phospholipids (sphingolipid and lysolipid substrates), forming an alcohol (often choline) and a cyclic phosphate. This toxin acts on sphingomyelin (SM) with high activity (56.8 U/mg). It may also act on ceramide phosphoethanolamine (CPE), lysophosphatidylcholine (LPC) and lysophosphatidylethanolamine (LPE), but not on lysophosphatidylserine (LPS), and lysophosphatidylglycerol (LPG). It acts by transphosphatidylation, releasing exclusively cyclic phosphate products as second products. Induces dermonecrosis, hemolysis, increased vascular permeability, edema, inflammatory response, and platelet aggregation. Is lethal to mice. The polypeptide is Dermonecrotic toxin LlSicTox-alphaIII1ii (Loxosceles laeta (South American recluse spider)).